Reading from the N-terminus, the 460-residue chain is UDP-N-acetylmuramoyl-tripeptide--D-alanyl-D-alanine ligase (460 aa).

Gly115–Ser121 lines the ATP pocket.

The protein belongs to the MurCDEF family. MurF subfamily.

It is found in the cytoplasm. It carries out the reaction D-alanyl-D-alanine + UDP-N-acetyl-alpha-D-muramoyl-L-alanyl-gamma-D-glutamyl-meso-2,6-diaminopimelate + ATP = UDP-N-acetyl-alpha-D-muramoyl-L-alanyl-gamma-D-glutamyl-meso-2,6-diaminopimeloyl-D-alanyl-D-alanine + ADP + phosphate + H(+). Its pathway is cell wall biogenesis; peptidoglycan biosynthesis. Functionally, involved in cell wall formation. Catalyzes the final step in the synthesis of UDP-N-acetylmuramoyl-pentapeptide, the precursor of murein. This Buchnera aphidicola subsp. Baizongia pistaciae (strain Bp) protein is UDP-N-acetylmuramoyl-tripeptide--D-alanyl-D-alanine ligase.